The sequence spans 313 residues: Oxaloacetate tautomerase Fahd2a, mitochondrial (313 aa).

The transit peptide at 1 to 84 directs the protein to the mitochondrion; that stretch reads MLGSGRRRLL…TALSVARRAL (84 aa). Positions 159, 161, and 190 each coordinate Mg(2+). The residue at position 202 (Lys-202) is an N6-acetyllysine; alternate. Lys-202 bears the N6-succinyllysine; alternate mark. Position 233 is an N6-acetyllysine (Lys-233).

Belongs to the FAH family. Mg(2+) is required as a cofactor. It depends on Mn(2+) as a cofactor.

It is found in the mitochondrion. It catalyses the reaction oxaloacetate = enol-oxaloacetate. Its function is as follows. Tautomerase that converts enol-oxaloacetate, a strong inhibitor of succinate dehydrogenase, to the physiological keto form of oxaloacetate. It is thereby required to maximize aerobic respiration efficiency by preventing succinate dehydrogenase inhibition. The sequence is that of Oxaloacetate tautomerase Fahd2a, mitochondrial from Rattus norvegicus (Rat).